We begin with the raw amino-acid sequence, 244 residues long: Type III pantothenate kinase (244 aa).

Residue 8-15 participates in ATP binding; the sequence is DQGNSACK. Substrate-binding positions include Tyr-88 and 94–97; that span reads GADR. The Proton acceptor role is filled by Asp-96. Position 117 (Asp-117) interacts with K(+). Thr-120 provides a ligand contact to ATP. Residue Thr-175 participates in substrate binding.

This sequence belongs to the type III pantothenate kinase family. As to quaternary structure, homodimer. NH4(+) is required as a cofactor. Requires K(+) as cofactor.

It localises to the cytoplasm. The enzyme catalyses (R)-pantothenate + ATP = (R)-4'-phosphopantothenate + ADP + H(+). It participates in cofactor biosynthesis; coenzyme A biosynthesis; CoA from (R)-pantothenate: step 1/5. Functionally, catalyzes the phosphorylation of pantothenate (Pan), the first step in CoA biosynthesis. This is Type III pantothenate kinase from Porphyromonas gingivalis (strain ATCC BAA-308 / W83).